A 589-amino-acid polypeptide reads, in one-letter code: Sentrin-specific protease 2 (589 aa).

Residues 28 to 31 carry the Nuclear localization signal motif; it reads KRRR. S32 carries the phosphoserine modification. The Nuclear localization signal motif lies at 46 to 51; the sequence is PAKRPR. The disordered stretch occupies residues 155 to 176; the sequence is SEGCNRRPGGRRHSKGNPESSL. The short motif at 317–332 is the Nuclear export signal element; sequence LEPDLSEEVSARLRLG. Residues S333 and S344 each carry the phosphoserine modification. Residues 396–560 are protease; the sequence is RITRGDIQTL…FTCKYADYIS (165 aa). Residues H478 and D495 contribute to the active site. Residue C548 is the Nucleophile of the active site.

The protein belongs to the peptidase C48 family. In terms of assembly, binds to SUMO2 and SUMO3. Interacts with the C-terminal domain of NUP153 via its N-terminus. Interacts with MTA1. In terms of processing, polyubiquitinated; which leads to proteasomal degradation.

The protein localises to the nucleus. It is found in the nuclear pore complex. The protein resides in the nucleus membrane. Its subcellular location is the cytoplasm. Functionally, protease that catalyzes two essential functions in the SUMO pathway. The first is the hydrolysis of an alpha-linked peptide bond at the C-terminal end of the small ubiquitin-like modifier (SUMO) propeptides, SUMO1, SUMO2 and SUMO3 leading to the mature form of the proteins. The second is the deconjugation of SUMO1, SUMO2 and SUMO3 from targeted proteins, by cleaving an epsilon-linked peptide bond between the C-terminal glycine of the mature SUMO and the lysine epsilon-amino group of the target protein. May down-regulate CTNNB1 levels and thereby modulate the Wnt pathway. Deconjugates SUMO2 from MTA1. Plays a dynamic role in adipogenesis by desumoylating and promoting the stabilization of CEBPB. Acts as a regulator of the cGAS-STING pathway by catalyzing desumoylation of CGAS and STING1 during the late phase of viral infection. The polypeptide is Sentrin-specific protease 2 (Homo sapiens (Human)).